Reading from the N-terminus, the 212-residue chain is MATTIARIGSANWAKLLVLLWLVQLATAGEPNPACKTLPTVDKDNEDKCCDVPEMFPNETLNACMEEHQQSSKPPLQKSCEITTCVLKKQSLIKSDNTVDKDKIKSYIKEMVKGSDEWKTLVEKAVLEECLPLMDKDPSNVLSKLKSSLGDCDPAPALTIACAAAKFYVNCPAKDRTKSPMCDEWRTFLSKCSNSLEDLNAIFMVLENQKTR.

Positions 1-28 (MATTIARIGSANWAKLLVLLWLVQLATA) are cleaved as a signal peptide. Intrachain disulfides connect Cys64/Cys85, Cys80/Cys152, and Cys130/Cys162.

The protein belongs to the PBP/GOBP family.

Its subcellular location is the secreted. Functionally, present in the aqueous fluid surrounding olfactory sensory dendrites and are thought to aid in the capture and transport of hydrophobic odorants into and through this fluid. The protein is General odorant-binding protein 68 (Obp68) of Anopheles gambiae (African malaria mosquito).